Here is a 442-residue protein sequence, read N- to C-terminus: N-acetyl-S-alkylcysteine sulfoxide monooxygenase (442 aa).

Positions 58, 95, 145, 149, 219, and 220 each coordinate FMN.

It belongs to the NtaA/SnaA/DszA monooxygenase family. Homodimer.

The enzyme catalyses (R)-N-acetyl-S-benzyl-L-cysteine sulfoxide + FMNH2 + O2 = N-acetyl-S-hydroxy-L-cysteine + benzaldehyde + FMN + H2O + H(+). It participates in amino-acid metabolism. Its function is as follows. Involved in a cysteine salvage pathway from S-alkylcysteine. Catalyzes the C-S bond cleavage in N-acetyl-S-benzyl-L-cysteine sulfoxide leading to N-acetyl-S-hydroxy-L-cysteine and benzaldehyde. This pathway is likely important in the catabolism of alkylated cysteine generated by proteolysis of alkylated glutathione formed in the detoxification of a wide range of electrophiles. Has much less efficient activity with N-acetyl-S-methyl-L-cysteine sulfoxide as substrate. Cannot use S-alkylated L-cysteine sulfones and ketone analogs as substrates, demonstrating that the sulfoxide is required for activity. This is N-acetyl-S-alkylcysteine sulfoxide monooxygenase from Bacillus subtilis (strain 168).